The sequence spans 204 residues: Cytochrome bo(3) ubiquinol oxidase subunit 3 (204 aa).

Residues 1–31 (MATDTLTHATAHAHEHGHHDAGGTKIFGFWI) are Cytoplasmic-facing. The helical transmembrane segment at 32–50 (YLMSDCILFSILFATYAVL) threads the bilayer. Residues 51 to 66 (VNGTAGGPTGKDIFEL) are Periplasmic-facing. A helical membrane pass occupies residues 67 to 85 (PFVLVETFLLLFSSITYGM). Residues 86-101 (AAIAMYKNNKSQVISW) lie on the Cytoplasmic side of the membrane. Residues 102–120 (LALTWLFGAGFIGMEIYEF) traverse the membrane as a helical segment. Residues 121–142 (HHLIVNGMGPDRSGFLSAFFAL) lie on the Periplasmic side of the membrane. The helical transmembrane segment at 143-161 (VGTHGLHVTSGLIWMAVLM) threads the bilayer. The Cytoplasmic portion of the chain corresponds to 162-184 (VQIARRGLTSTNRTRIMCLSLFW). A helical transmembrane segment spans residues 185–203 (HFLDVVWICVFTVVYLMGA). Position 204 (Met-204) is a topological domain, periplasmic.

Belongs to the cytochrome c oxidase subunit 3 family. Heterooctamer of two A chains, two B chains, two C chains and two D chains.

Its subcellular location is the cell inner membrane. Functionally, cytochrome bo(3) ubiquinol terminal oxidase is the component of the aerobic respiratory chain of E.coli that predominates when cells are grown at high aeration. Has proton pump activity across the membrane in addition to electron transfer, pumping 2 protons/electron. This is Cytochrome bo(3) ubiquinol oxidase subunit 3 (cyoC) from Escherichia coli O6:H1 (strain CFT073 / ATCC 700928 / UPEC).